The chain runs to 308 residues: Alpha/beta hydrolase domain-containing protein WAV2 (308 aa).

Residues 6–26 (SALFYGFGGIVVAGVALLVAF) form a helical membrane-spanning segment. Residues serine 159, aspartate 243, and arginine 308 each act as charge relay system in the active site.

Belongs to the serine esterase family. In terms of tissue distribution, expressed in roots, rosette leaves, stems and flowers.

The protein localises to the cell membrane. Functionally, involved in the regulation of root growth. Involved in the suppression of the root bending in response to touch stimuli, gravity and light. Negatively regulates stimulus-induced root bending through inhibition of root tip rotation. In Arabidopsis thaliana (Mouse-ear cress), this protein is Alpha/beta hydrolase domain-containing protein WAV2.